A 142-amino-acid chain; its full sequence is Holo-[acyl-carrier-protein] synthase (142 aa).

Mg(2+)-binding residues include D9 and E63.

This sequence belongs to the P-Pant transferase superfamily. AcpS family. It depends on Mg(2+) as a cofactor.

Its subcellular location is the cytoplasm. It catalyses the reaction apo-[ACP] + CoA = holo-[ACP] + adenosine 3',5'-bisphosphate + H(+). Its function is as follows. Transfers the 4'-phosphopantetheine moiety from coenzyme A to a Ser of acyl-carrier-protein. The polypeptide is Holo-[acyl-carrier-protein] synthase (Burkholderia lata (strain ATCC 17760 / DSM 23089 / LMG 22485 / NCIMB 9086 / R18194 / 383)).